Consider the following 396-residue polypeptide: Aspartic protease 1 (396 aa).

The signal sequence occupies residues 1 to 15 (MQTFVLLALVAACSA). The Peptidase A1 domain occupies 68 to 389 (YLGNITLGTP…DIGNGQIGFA (322 aa)). An N-linked (GlcNAc...) asparagine glycan is attached at Asn-71. Residue Asp-86 is part of the active site. A disulfide bond links Cys-99 and Cys-104. The active site involves Asp-278. A disulfide bridge links Cys-313 with Cys-349.

It belongs to the peptidase A1 family. In terms of assembly, interacts with B.thuringiensis endotoxin Cry6Aa; the interaction prevents Cry6Aa proteolysis by host gut proteases.

Its subcellular location is the cytoplasm. It is found in the lysosome. It localises to the secreted. Aspartic protease, which is part of the necrosis cell death pathway. Promotes B.thuringiensis Cry6Aa stability by preventing its proteolysis by host gut proteases. Required for Cry6Aa-induced necrotic death of intestinal cells. Cry6Aa uptake into the host intestinal cells triggers an increase in intracellular Ca(2+) levels leading to lysosome rupture and to the subsequent release of asp-1 which leads to necrosis. The polypeptide is Aspartic protease 1 (Caenorhabditis elegans).